The primary structure comprises 502 residues: Large ribosomal subunit protein uL2m (502 aa).

The interval 458 to 502 is disordered; sequence AMNPVDHPHGGGEGRTKGGRPSVSPWGKPTKAGFRAGVGVGKRRI. The segment covering 463–473 has biased composition (basic and acidic residues); sequence DHPHGGGEGRT. A compositionally biased stretch (gly residues) spans 493–502; the sequence is AGVGVGKRRI.

Belongs to the universal ribosomal protein uL2 family.

The protein localises to the mitochondrion. In Oryza sativa (Rice), this protein is Large ribosomal subunit protein uL2m (RPL2).